The sequence spans 512 residues: Maturase K (512 aa).

It belongs to the intron maturase 2 family. MatK subfamily.

The protein resides in the plastid. It is found in the chloroplast. Usually encoded in the trnK tRNA gene intron. Probably assists in splicing its own and other chloroplast group II introns. This chain is Maturase K, found in Dalea wrightii (Wright's prairie clover).